The primary structure comprises 131 residues: uncharacterized protein (131 aa).

Residues 64–81 form a CCHC-type; degenerate zinc finger; it reads VNCDKCGKPGNVKNDCPG.

This is an uncharacterized protein from Homo sapiens (Human).